The chain runs to 72 residues: C-hordein (72 aa).

The span at 1 to 36 (FPQPQEPFPQQPQQPFPLQPQQPFPQQPQQPFPQPQ) shows a compositional bias: pro residues. Residues 1–61 (FPQPQEPFPQ…QQPFPLQPHQ (61 aa)) form a disordered region. Over residues 37-50 (QPFRQQAELIIPQQ) the composition is skewed to low complexity.

As to expression, developing endosperm.

Sulfur-poor seed storage protein. The chain is C-hordein from Hordeum vulgare (Barley).